Here is a 40-residue protein sequence, read N- to C-terminus: Natriuretic peptide PtNP-a (40 aa).

C9 and C25 are joined by a disulfide. The span at 17–34 (ISNTSGMGCRNPIQNRPK) shows a compositional bias: polar residues. The interval 17 to 40 (ISNTSGMGCRNPIQNRPKSTPGGS) is disordered.

Belongs to the natriuretic peptide family. Expressed by the venom gland.

The protein localises to the secreted. In terms of biological role, snake venom natriuretic peptide that targets NPR1 and possibly NPR2. Exhibits hypotensive and vasodepressor activities. Recombinant PtNP-a demonstrates a dose-dependent stimulation of cGMP production via the natriuretic peptide receptor 1 (NPR1) (EC(50)=563 nM) in Madine Darby Canine Kidney (MDCK) cells. It also inhibits the angiotensin converting enzyme (ACE). The chain is Natriuretic peptide PtNP-a from Pseudonaja textilis (Eastern brown snake).